A 93-amino-acid chain; its full sequence is Acylphosphatase (93 aa).

A disulfide bond links cysteine 5 and cysteine 49. An Acylphosphatase-like domain is found at 5–93 (CIIAWVYGRV…ETLTGFSIRY (89 aa)). Residues arginine 20 and asparagine 38 contribute to the active site.

This sequence belongs to the acylphosphatase family.

The catalysed reaction is an acyl phosphate + H2O = a carboxylate + phosphate + H(+). This Salmonella typhi protein is Acylphosphatase.